The primary structure comprises 228 residues: MTIKLNLYGKEDIGNYILLTNSYCIVPHDINSKNYNIIKSELDNKINIICTNVSESICVGNLLIGNSKGLIVPNTITFHEQNELLNFLPEKVLVKKFNENLTNLGNLLAHNELYGLSSPDLSQSSCELISDVLGVEILKLTLGEEKMIGTYCKFNINGGIVQPFLSIEDHDELVEITGVPFIGGTVNSGCSNVGKGIVCNDNLVFCGYKTNQTEMHIINNIMKKSKNK.

Belongs to the eIF-6 family. In terms of assembly, monomer. Associates with the 60S ribosomal subunit.

It localises to the cytoplasm. The protein resides in the nucleus. The protein localises to the nucleolus. In terms of biological role, binds to the 60S ribosomal subunit and prevents its association with the 40S ribosomal subunit to form the 80S initiation complex in the cytoplasm. May also be involved in ribosome biogenesis. This is Eukaryotic translation initiation factor 6 from Guillardia theta (Cryptophyte).